The sequence spans 219 residues: Dynein light chain Tctex-type 4 (219 aa).

Residues 1–84 (MAGRPVPAGR…RRPSLGPVPP (84 aa)) form a disordered region. Residues 10-20 (RQEEELAKDPG) show a composition bias toward basic and acidic residues. Ser64 bears the Phosphoserine mark.

Belongs to the dynein light chain Tctex-type family. As to quaternary structure, interacts with ENG/endoglin, TGFBR2 and TGFBR3. Interacts with PPP1CC.

The protein resides in the cell projection. The protein localises to the cilium. It is found in the flagellum. It localises to the cytoplasmic vesicle. Its subcellular location is the secretory vesicle. The protein resides in the acrosome. The protein localises to the cytoplasm. It is found in the cytoskeleton. It localises to the cilium axoneme. Its subcellular location is the nucleus. The protein resides in the microtubule organizing center. In Sus scrofa (Pig), this protein is Dynein light chain Tctex-type 4 (DYNLT4).